The following is a 480-amino-acid chain: 3-isopropylmalate dehydratase large subunit (480 aa).

Positions 357, 417, and 420 each coordinate [4Fe-4S] cluster. Over residues 431–441 (GQRCASTSNRN) the composition is skewed to polar residues. Residues 431 to 454 (GQRCASTSNRNFEGRQGKGGRTHL) form a disordered region.

It belongs to the aconitase/IPM isomerase family. LeuC type 1 subfamily. As to quaternary structure, heterodimer of LeuC and LeuD. [4Fe-4S] cluster serves as cofactor.

It carries out the reaction (2R,3S)-3-isopropylmalate = (2S)-2-isopropylmalate. It functions in the pathway amino-acid biosynthesis; L-leucine biosynthesis; L-leucine from 3-methyl-2-oxobutanoate: step 2/4. Functionally, catalyzes the isomerization between 2-isopropylmalate and 3-isopropylmalate, via the formation of 2-isopropylmaleate. The sequence is that of 3-isopropylmalate dehydratase large subunit from Mycobacteroides abscessus (strain ATCC 19977 / DSM 44196 / CCUG 20993 / CIP 104536 / JCM 13569 / NCTC 13031 / TMC 1543 / L948) (Mycobacterium abscessus).